A 58-amino-acid chain; its full sequence is Photosystem II reaction center protein K (58 aa).

Residues 1–21 (MFNAYLDTVLDLSANGTVILA) constitute a propeptide that is removed on maturation. A helical transmembrane segment spans residues 29–49 (IFDPIVDVMPIIPVFFLLLAF).

The protein belongs to the PsbK family. In terms of assembly, PSII is composed of 1 copy each of membrane proteins PsbA, PsbB, PsbC, PsbD, PsbE, PsbF, PsbH, PsbI, PsbJ, PsbK, PsbL, PsbM, PsbT, PsbX, PsbY, PsbZ, Psb30/Ycf12, at least 3 peripheral proteins of the oxygen-evolving complex and a large number of cofactors. It forms dimeric complexes.

It localises to the plastid. The protein resides in the chloroplast thylakoid membrane. In terms of biological role, one of the components of the core complex of photosystem II (PSII). PSII is a light-driven water:plastoquinone oxidoreductase that uses light energy to abstract electrons from H(2)O, generating O(2) and a proton gradient subsequently used for ATP formation. It consists of a core antenna complex that captures photons, and an electron transfer chain that converts photonic excitation into a charge separation. The protein is Photosystem II reaction center protein K of Staurastrum punctulatum (Green alga).